Consider the following 274-residue polypeptide: Orotidine 5'-phosphate decarboxylase (274 aa).

Substrate is bound by residues D40, 62 to 64 (KTH), 93 to 102 (DRKFIDIGNT), Y227, and R245. The Proton donor role is filled by K95.

The protein belongs to the OMP decarboxylase family.

The enzyme catalyses orotidine 5'-phosphate + H(+) = UMP + CO2. It functions in the pathway pyrimidine metabolism; UMP biosynthesis via de novo pathway; UMP from orotate: step 2/2. In Emericella nidulans (strain FGSC A4 / ATCC 38163 / CBS 112.46 / NRRL 194 / M139) (Aspergillus nidulans), this protein is Orotidine 5'-phosphate decarboxylase (pyrG).